The following is a 491-amino-acid chain: Stage IV sporulation protein A (491 aa).

A Walker A motif; involved in ATP-binding motif is present at residues 23–30 (GPVRTGKS). 23–30 (GPVRTGKS) is an ATP binding site. Positions 334–362 (QLLSLITRLSKVKNEYDKIESALIDAKIK) form a coiled coil.

In terms of assembly, interacts (via Walker A motif) with SipL (via C-terminus LysM domain).

The protein resides in the cytoplasm. The enzyme catalyses ATP + H2O = ADP + phosphate + H(+). Its function is as follows. ATPase. Has a role at an early stage in the morphogenesis of the spore coat and is required for proper coat localization to the forespore. This Clostridioides difficile (strain 630) (Peptoclostridium difficile) protein is Stage IV sporulation protein A.